The following is a 351-amino-acid chain: Probable protein phosphatase 2C 8 (351 aa).

The disordered stretch occupies residues 1 to 63 (MLEKESDLTA…REAEEDKPSF (63 aa)). The segment covering 54 to 63 (REAEEDKPSF) has biased composition (basic and acidic residues). A PPM-type phosphatase domain is found at 74-348 (EADVAEDKGA…DNCTAIVIVF (275 aa)). 4 residues coordinate Mn(2+): aspartate 114, glycine 115, aspartate 295, and aspartate 339.

It belongs to the PP2C family. Mg(2+) is required as a cofactor. The cofactor is Mn(2+).

The catalysed reaction is O-phospho-L-seryl-[protein] + H2O = L-seryl-[protein] + phosphate. It catalyses the reaction O-phospho-L-threonyl-[protein] + H2O = L-threonyl-[protein] + phosphate. This is Probable protein phosphatase 2C 8 from Arabidopsis thaliana (Mouse-ear cress).